We begin with the raw amino-acid sequence, 491 residues long: Cobyric acid synthase (491 aa).

The GATase cobBQ-type domain occupies 258–445; that stretch reads ALKVAVPVLG…MHGLFGADAF (188 aa). Catalysis depends on Cys340, which acts as the Nucleophile. The active site involves His437.

This sequence belongs to the CobB/CobQ family. CobQ subfamily.

It participates in cofactor biosynthesis; adenosylcobalamin biosynthesis. Catalyzes amidations at positions B, D, E, and G on adenosylcobyrinic A,C-diamide. NH(2) groups are provided by glutamine, and one molecule of ATP is hydrogenolyzed for each amidation. This is Cobyric acid synthase from Mesorhizobium japonicum (strain LMG 29417 / CECT 9101 / MAFF 303099) (Mesorhizobium loti (strain MAFF 303099)).